The following is a 212-amino-acid chain: Interleukin-6 (212 aa).

Positions 1–29 are cleaved as a signal peptide; that stretch reads MNSLSTSAFSPVAFSLGLLLVMATAFPTP. Residues C72 and C78 are joined by a disulfide bond. S81 bears the Phosphoserine mark. A disulfide bridge connects residues C101 and C111. Residues 156–175 form a disordered region; the sequence is QKGKNPDKATTPNPTTNAGL. Over residues 163–175 the composition is skewed to polar residues; it reads KATTPNPTTNAGL.

It belongs to the IL-6 superfamily. Component of a hexamer of two molecules each of IL6, IL6R and IL6ST; first binds to IL6R to associate with the signaling subunit IL6ST. Interacts with IL6R (via the N-terminal ectodomain); this interaction may be affected by IL6R-binding with SORL1, hence decreasing IL6 cis signaling. Interacts with SORL1 (via the N-terminal ectodomain); this interaction leads to IL6 internalization and lysosomal degradation. May form a trimeric complex with the soluble SORL1 ectodomain and soluble IL6R receptor; this interaction might stabilize circulating IL6, hence promoting IL6 trans signaling.

It is found in the secreted. Functionally, cytokine with a wide variety of biological functions in immunity, tissue regeneration, and metabolism. Binds to IL6R, then the complex associates to the signaling subunit IL6ST/gp130 to trigger the intracellular IL6-signaling pathway. The interaction with the membrane-bound IL6R and IL6ST stimulates 'classic signaling', whereas the binding of IL6 and soluble IL6R to IL6ST stimulates 'trans-signaling'. Alternatively, 'cluster signaling' occurs when membrane-bound IL6:IL6R complexes on transmitter cells activate IL6ST receptors on neighboring receiver cells. Its function is as follows. IL6 is a potent inducer of the acute phase response. Rapid production of IL6 contributes to host defense during infection and tissue injury, but excessive IL6 synthesis is involved in disease pathology. In the innate immune response, is synthesized by myeloid cells, such as macrophages and dendritic cells, upon recognition of pathogens through toll-like receptors (TLRs) at the site of infection or tissue injury. In the adaptive immune response, is required for the differentiation of B cells into immunoglobulin-secreting cells. Plays a major role in the differentiation of CD4(+) T cell subsets. Essential factor for the development of T follicular helper (Tfh) cells that are required for the induction of germinal-center formation. Required to drive naive CD4(+) T cells to the Th17 lineage. Also required for proliferation of myeloma cells and the survival of plasmablast cells. In terms of biological role, acts as an essential factor in bone homeostasis and on vessels directly or indirectly by induction of VEGF, resulting in increased angiogenesis activity and vascular permeability. Induces, through 'trans-signaling' and synergistically with IL1B and TNF, the production of VEGF. Involved in metabolic controls, is discharged into the bloodstream after muscle contraction increasing lipolysis and improving insulin resistance. 'Trans-signaling' in central nervous system also regulates energy and glucose homeostasis. Mediates, through GLP-1, crosstalk between insulin-sensitive tissues, intestinal L cells and pancreatic islets to adapt to changes in insulin demand. Also acts as a myokine. Plays a protective role during liver injury, being required for maintenance of tissue regeneration. Also has a pivotal role in iron metabolism by regulating HAMP/hepcidin expression upon inflammation or bacterial infection. Through activation of IL6ST-YAP-NOTCH pathway, induces inflammation-induced epithelial regeneration. The polypeptide is Interleukin-6 (IL6) (Sus scrofa (Pig)).